Consider the following 240-residue polypeptide: Probable transcriptional regulator ycf27 (240 aa).

A Response regulatory domain is found at 5-118; sequence KILVIDDEAS…ELEARIRSVL (114 aa). Position 54 is a 4-aspartylphosphate (Asp54). The segment at residues 74-92 is a DNA-binding region (H-T-H motif); sequence DVPIIMLTALSDVSDRITG. The ompR/PhoB-type DNA-binding region spans 133-234; it reads SGIINIGFLK…ARGTGYLFQR (102 aa).

It localises to the plastid. Its subcellular location is the chloroplast. In terms of biological role, probable promoter-specific protein mediating the interaction between DNA and RNA polymerase. The chain is Probable transcriptional regulator ycf27 (ycf27) from Porphyridium aerugineum (Red microalga).